The sequence spans 607 residues: NADH-ubiquinone oxidoreductase chain 5 (607 aa).

Transmembrane regions (helical) follow at residues 3 to 23 (IFTT…LISM), 35 to 55 (YTTT…LMFF), 84 to 104 (FFSI…MQFS), 117 to 137 (FIKY…ANNM), 140 to 160 (LFIG…WWYG), 171 to 191 (AILY…WFSL), 210 to 230 (LIPL…FGLH), 241 to 261 (TPVS…FLLV), 272 to 292 (FILT…AICA), 301 to 320 (IIAF…LGMN), 324 to 344 (LAFL…MCSG), 365 to 385 (IMPF…GMPF), 405 to 427 (NAWA…MRII), 457 to 477 (LAFG…PTSI), 482 to 502 (MPWF…LIAL), and 586 to 606 (LYFM…SINL).

This sequence belongs to the complex I subunit 5 family. As to quaternary structure, core subunit of respiratory chain NADH dehydrogenase (Complex I) which is composed of 45 different subunits.

The protein resides in the mitochondrion inner membrane. The enzyme catalyses a ubiquinone + NADH + 5 H(+)(in) = a ubiquinol + NAD(+) + 4 H(+)(out). Its function is as follows. Core subunit of the mitochondrial membrane respiratory chain NADH dehydrogenase (Complex I) which catalyzes electron transfer from NADH through the respiratory chain, using ubiquinone as an electron acceptor. Essential for the catalytic activity and assembly of complex I. In Mus musculus (Mouse), this protein is NADH-ubiquinone oxidoreductase chain 5 (Mtnd5).